The following is a 94-amino-acid chain: MREEIEKHFRIYGEEKIGKTVRFYVVPLSPESEIRKLLHLLSQSYEVGLRYQYGEMVLELKEIERKESYLTNIILFMQPSLPPQPLVQPSTVRR.

This is an uncharacterized protein from Archaeoglobus fulgidus (strain ATCC 49558 / DSM 4304 / JCM 9628 / NBRC 100126 / VC-16).